Here is a 242-residue protein sequence, read N- to C-terminus: Venom nerve growth factor 2 (242 aa).

The first 18 residues, 1–18 (MSMLCYTLIIAFLIGIWA), serve as a signal peptide directing secretion. Positions 19-125 (APQSEDNVPL…ALNRNIQAKR (107 aa)) are excised as a propeptide. Over residues 47–66 (DLKTSRNTDQRHPAPKKADD) the composition is skewed to basic and acidic residues. The disordered stretch occupies residues 47–70 (DLKTSRNTDQRHPAPKKADDQELG). 3 cysteine pairs are disulfide-bonded: Cys-139-Cys-203, Cys-181-Cys-231, and Cys-191-Cys-233.

The protein belongs to the NGF-beta family. Homodimer; non-covalently linked. Expressed by the venom gland.

The protein localises to the secreted. In terms of biological role, nerve growth factor is important for the development and maintenance of the sympathetic and sensory nervous systems. It stimulates division and differentiation of sympathetic and embryonic sensory neurons as well as basal forebrain cholinergic neurons in the brain. Its relevance in the snake venom is not clear. However, it has been shown to inhibit metalloproteinase-dependent proteolysis of platelet glycoprotein Ib alpha, suggesting a metalloproteinase inhibition to prevent metalloprotease autodigestion and/or protection against prey proteases. Binds a lipid between the two protein chains in the homodimer. The lipid-bound form promotes histamine relase from mouse mast cells, contrary to the lipid-free form. The chain is Venom nerve growth factor 2 from Pseudechis australis (Mulga snake).